A 152-amino-acid chain; its full sequence is Deoxyuridine 5'-triphosphate nucleotidohydrolase (152 aa).

Residues 71–73 (RSG), Asn-84, 88–90 (LID), and Met-98 contribute to the substrate site.

Belongs to the dUTPase family. The cofactor is Mg(2+).

The catalysed reaction is dUTP + H2O = dUMP + diphosphate + H(+). It functions in the pathway pyrimidine metabolism; dUMP biosynthesis; dUMP from dCTP (dUTP route): step 2/2. This enzyme is involved in nucleotide metabolism: it produces dUMP, the immediate precursor of thymidine nucleotides and it decreases the intracellular concentration of dUTP so that uracil cannot be incorporated into DNA. This is Deoxyuridine 5'-triphosphate nucleotidohydrolase from Hahella chejuensis (strain KCTC 2396).